Consider the following 253-residue polypeptide: 5-oxoprolinase subunit A (253 aa).

The protein belongs to the LamB/PxpA family. In terms of assembly, forms a complex composed of PxpA, PxpB and PxpC.

The catalysed reaction is 5-oxo-L-proline + ATP + 2 H2O = L-glutamate + ADP + phosphate + H(+). Its function is as follows. Catalyzes the cleavage of 5-oxoproline to form L-glutamate coupled to the hydrolysis of ATP to ADP and inorganic phosphate. The sequence is that of 5-oxoprolinase subunit A from Syntrophobacter fumaroxidans (strain DSM 10017 / MPOB).